A 381-amino-acid polypeptide reads, in one-letter code: MRFTALASAILPLACNVLALPAKTGEAPKLDVSLSQVDNTLIKAVVKNTGSEDITFVHLNFFRDKAPVKKVSLFRQRYVIPLHPHFPALTSVIQPTELPFQGIKQRFRTEGLTEDALTVLAPGESIEDEFDIAATSDLSEGGSITISTDGFVPIATGNKITGSVPYSSNELSIEVDAAQAASVASAVKPLDKRTKVASCSGTRSSALSTALKNTVSLANQAASAAQSGSSSRFQEYFKTTSSSVRTSVAARFRAVASEASSTSSGSTTYYCTDTYGYCSSNVPGVHLPAYNIIANCDIYYTYLSALTRTCHAQDQATTTLHEFTHAPGVYSPGTDDLGYGYDAATALSSSQALNNVDTYALFANGKFLLSREVDVKYLHTT.

The signal sequence occupies residues 1 to 19 (MRFTALASAILPLACNVLA). A propeptide spanning residues 20–193 (LPAKTGEAPK…ASAVKPLDKR (174 aa)) is cleaved from the precursor. Cystine bridges form between Cys199–Cys271 and Cys278–Cys296. His321 lines the Zn(2+) pocket. The active site involves Glu322. Zn(2+) contacts are provided by His325 and Asp336.

The protein belongs to the peptidase M35 family. It depends on Zn(2+) as a cofactor.

The catalysed reaction is Preferential cleavage of bonds with hydrophobic residues in P1'. Also 3-Asn-|-Gln-4 and 8-Gly-|-Ser-9 bonds in insulin B chain.. Secreted metalloproteinase that allows assimilation of proteinaceous substrates. Shows high activities on basic nuclear substrates such as histone and protamine. This is Neutral protease 2 homolog mep20 (mep20) from Aspergillus flavus.